The primary structure comprises 880 residues: Tyrosine-protein kinase receptor TYRO3 (880 aa).

An N-terminal signal peptide occupies residues 1–30 (MALRRSMGWPGLRPLLLAGLASLLLPGSAA). 2 consecutive Ig-like C2-type domains span residues 31–118 (AGLK…TKIS) and 129–209 (PFFT…PAIV). The Extracellular portion of the chain corresponds to 31-419 (AGLKLMGAPV…QGPPHSRTSW (389 aa)). Asn-53, Asn-75, Asn-181, Asn-220, Asn-230, Asn-283, Asn-356, and Asn-370 each carry an N-linked (GlcNAc...) asparagine glycan. 2 disulfide bridges follow: Cys-54-Cys-107 and Cys-150-Cys-193. 2 consecutive Fibronectin type-III domains span residues 217–310 (APFN…TKGL) and 315–406 (APQN…SHDH). The helical transmembrane segment at 420–440 (VPVVLGVLTALITAAALALIL) threads the bilayer. The Cytoplasmic portion of the chain corresponds to 441–880 (LRKRRKETRF…QQGLLPHSSC (440 aa)). Residue Ser-456 is modified to Phosphoserine. In terms of domain architecture, Protein kinase spans 508–785 (FTLGRMLGKG…LENILGHLSV (278 aa)). ATP-binding positions include 514 to 522 (LGKGEFGSV) and Lys-540. The active-site Proton acceptor is Asp-645. Phosphotyrosine; by autocatalysis is present on residues Tyr-671, Tyr-675, Tyr-676, and Tyr-794. A disordered region spans residues 800–864 (AEQPTESGSP…QQPESPLNEN (65 aa)). Ser-808 and Ser-859 each carry phosphoserine. The span at 849–864 (SPGQLEQQPESPLNEN) shows a compositional bias: polar residues.

Belongs to the protein kinase superfamily. Tyr protein kinase family. AXL/UFO subfamily. As to quaternary structure, monomer and homodimer. Interacts (via N-terminus) with extracellular ligands TULP1 and GAS6. Interacts with PIK3R1; this interaction increases PI3-kinase activity. In terms of processing, autophosphorylated. Abundant in the brain and lower levels in other tissues.

The protein resides in the cell membrane. It carries out the reaction L-tyrosyl-[protein] + ATP = O-phospho-L-tyrosyl-[protein] + ADP + H(+). Its function is as follows. Receptor tyrosine kinase that transduces signals from the extracellular matrix into the cytoplasm by binding to several ligands including TULP1 or GAS6. Regulates many physiological processes including cell survival, migration and differentiation. Ligand binding at the cell surface induces dimerization and autophosphorylation of TYRO3 on its intracellular domain that provides docking sites for downstream signaling molecules. Following activation by ligand, interacts with PIK3R1 and thereby enhances PI3-kinase activity. Activates the AKT survival pathway, including nuclear translocation of NF-kappa-B and up-regulation of transcription of NF-kappa-B-regulated genes. TYRO3 signaling plays a role in various processes such as neuron protection from excitotoxic injury, platelet aggregation and cytoskeleton reorganization. Also plays an important role in inhibition of Toll-like receptors (TLRs)-mediated innate immune response by activating STAT1, which selectively induces production of suppressors of cytokine signaling SOCS1 and SOCS3. This is Tyrosine-protein kinase receptor TYRO3 (Tyro3) from Mus musculus (Mouse).